The following is an 877-amino-acid chain: Alanine--tRNA ligase (877 aa).

Zn(2+) contacts are provided by His561, His565, Cys669, and His673.

This sequence belongs to the class-II aminoacyl-tRNA synthetase family. Zn(2+) serves as cofactor.

The protein localises to the cytoplasm. It carries out the reaction tRNA(Ala) + L-alanine + ATP = L-alanyl-tRNA(Ala) + AMP + diphosphate. Its function is as follows. Catalyzes the attachment of alanine to tRNA(Ala) in a two-step reaction: alanine is first activated by ATP to form Ala-AMP and then transferred to the acceptor end of tRNA(Ala). Also edits incorrectly charged Ser-tRNA(Ala) and Gly-tRNA(Ala) via its editing domain. The chain is Alanine--tRNA ligase from Endomicrobium trichonymphae.